A 265-amino-acid polypeptide reads, in one-letter code: Hydroxyethylthiazole kinase (265 aa).

Residue Met-36 participates in substrate binding. Residues Lys-112 and Ser-160 each contribute to the ATP site. Gly-187 contributes to the substrate binding site.

This sequence belongs to the Thz kinase family. Mg(2+) is required as a cofactor.

It catalyses the reaction 5-(2-hydroxyethyl)-4-methylthiazole + ATP = 4-methyl-5-(2-phosphooxyethyl)-thiazole + ADP + H(+). Its pathway is cofactor biosynthesis; thiamine diphosphate biosynthesis; 4-methyl-5-(2-phosphoethyl)-thiazole from 5-(2-hydroxyethyl)-4-methylthiazole: step 1/1. Functionally, catalyzes the phosphorylation of the hydroxyl group of 4-methyl-5-beta-hydroxyethylthiazole (THZ). The polypeptide is Hydroxyethylthiazole kinase (Clostridium perfringens (strain 13 / Type A)).